Consider the following 155-residue polypeptide: Putative pre-16S rRNA nuclease (155 aa).

Belongs to the YqgF nuclease family.

It is found in the cytoplasm. Could be a nuclease involved in processing of the 5'-end of pre-16S rRNA. The chain is Putative pre-16S rRNA nuclease from Wolbachia sp. subsp. Brugia malayi (strain TRS).